A 150-amino-acid chain; its full sequence is Ribonuclease pancreatic delta-type (150 aa).

The N-terminal stretch at 1–25 (MGLEKSFILFSLLVLVLGWVQPSLG) is a signal peptide. Arginine 35 contributes to the substrate binding site. Catalysis depends on histidine 37, which acts as the Proton acceptor. Intrachain disulfides connect cysteine 51-cysteine 110, cysteine 65-cysteine 121, cysteine 83-cysteine 136, and cysteine 90-cysteine 98. Substrate contacts are provided by residues 66 to 70 (KPVNT) and lysine 91. The active-site Proton donor is the histidine 145.

It belongs to the pancreatic ribonuclease family. As to quaternary structure, monomer.

The protein localises to the secreted. It catalyses the reaction an [RNA] containing cytidine + H2O = an [RNA]-3'-cytidine-3'-phosphate + a 5'-hydroxy-ribonucleotide-3'-[RNA].. It carries out the reaction an [RNA] containing uridine + H2O = an [RNA]-3'-uridine-3'-phosphate + a 5'-hydroxy-ribonucleotide-3'-[RNA].. Endonuclease that catalyzes the cleavage of RNA on the 3' side of pyrimidine nucleotides. Acts on single-stranded and double-stranded RNA. This chain is Ribonuclease pancreatic delta-type, found in Rattus tiomanicus (Malayan field rat).